Here is a 504-residue protein sequence, read N- to C-terminus: Plasma protease C1 inhibitor (504 aa).

Residues 1-22 form the signal peptide; the sequence is MASKLTPLTLLLLLLAGDRAFS. The interval 23–75 is disordered; it reads DSEVTSHSSQDPLVVQEGSRDSVPERDGSRSPIEHTGQSSTWPTTSGSTKISN. Residues 24–33 show a composition bias toward polar residues; that stretch reads SEVTSHSSQD. Over residues 40 to 55 the composition is skewed to basic and acidic residues; the sequence is GSRDSVPERDGSRSPI. The span at 58–75 shows a compositional bias: polar residues; that stretch reads TGQSSTWPTTSGSTKISN. 5 N-linked (GlcNAc...) asparagine glycosylation sites follow: N75, N83, N107, N243, and N356. The interval 94 to 132 is disordered; that stretch reads AQLPEDSPSQSPVNSSSPPSTASAPPTQAPTEPLCPEPL. Residues 100 to 125 are compositionally biased toward low complexity; that stretch reads SPSQSPVNSSSPPSTASAPPTQAPTE.

The protein belongs to the serpin family. As to quaternary structure, interacts with MASP1.

It is found in the secreted. In terms of biological role, serine protease inhibitor, which acrs as a regulator of the classical complement pathway. Forms a proteolytically inactive stoichiometric complex with the C1r or C1s proteases. May also regulate blood coagulation, fibrinolysis and the generation of kinins. Very efficient inhibitor of FXIIa. Inhibits chymotrypsin and kallikrein. In Rattus norvegicus (Rat), this protein is Plasma protease C1 inhibitor (Serping1).